The primary structure comprises 109 residues: SRA stem-loop-interacting RNA-binding protein, mitochondrial (109 aa).

The residue at position 15 (S15) is a Phosphoserine. An RRM domain is found at 19-103; sequence PVAFVRRIPW…RRPKLPQTSD (85 aa). T101 carries the phosphothreonine modification. S102 is subject to Phosphoserine.

Its subcellular location is the mitochondrion. It localises to the nucleus. Its function is as follows. RNA-binding protein that acts as a nuclear receptor corepressor. Probably acts by binding the SRA RNA, and repressing the SRA-mediated nuclear receptor coactivation. Binds the STR7 loop of SRA RNA. Also able to repress glucocorticoid (GR), androgen (AR), thyroid (TR) and VDR-mediated transactivation. In Pongo abelii (Sumatran orangutan), this protein is SRA stem-loop-interacting RNA-binding protein, mitochondrial (SLIRP).